Consider the following 436-residue polypeptide: T-box transcription factor TBX6 (436 aa).

The T-box DNA-binding region spans 100–273; sequence LWKEFSSVGT…ANPFAKGFRE (174 aa). Positions 271 to 284 are enriched in basic and acidic residues; sequence FRENGRNCKRERDA. 2 disordered regions span residues 271-339 and 360-379; these read FREN…APAP and PSHL…SGRS. The segment covering 325 to 339 has biased composition (low complexity); the sequence is EQAPAPGEATAAPAP.

In terms of assembly, forms a dimeric complex with DNA (in vitro). In terms of tissue distribution, expressed in fetal tail bud, posterior spinal tissue, intervertebral disk and testis. Also expressed in adult testis, kidney, lung, muscle and thymus.

The protein resides in the nucleus. T-box transcription factor that plays an essential role in the determination of the fate of axial stem cells: neural vs mesodermal. Acts in part by down-regulating, a specific enhancer (N1) of SOX2, to inhibit neural development. Seems to play also an essential role in left/right axis determination and acts through effects on Notch signaling around the node as well as through an effect on the morphology and motility of the nodal cilia. This Homo sapiens (Human) protein is T-box transcription factor TBX6 (TBX6).